The sequence spans 107 residues: MQRFLCLVACSVVLLVLGIVADDEIGQVPEGGWTRGNKSNGERCKFNQHCHSKCCVLSERGKPRVCASKALEGESCNAGQIKGGYHARFCPCALGNGKCIKNICQLL.

Residues 1–21 form the signal peptide; sequence MQRFLCLVACSVVLLVLGIVA.

It belongs to the scoloptoxin-18 family. In terms of processing, contains 5 disulfide bonds. Expressed by the venom gland.

The protein resides in the secreted. The protein is U-scoloptoxin(18)-Er1a of Ethmostigmus rubripes (Giant centipede).